The primary structure comprises 162 residues: UPF0305 protein MmarC5_0909 (162 aa).

This sequence belongs to the UPF0305 family.

This Methanococcus maripaludis (strain C5 / ATCC BAA-1333) protein is UPF0305 protein MmarC5_0909.